The sequence spans 217 residues: Sentrin-specific protease 8 (217 aa).

M1 carries the N-acetylmethionine modification. The protease stretch occupies residues 11–174; sequence SLLRQSDVSL…MYVICNTEAL (164 aa). Residues H102 and D119 contribute to the active site. The active-site Nucleophile is C163.

It belongs to the peptidase C48 family.

Its function is as follows. Protease that catalyzes two essential functions in the NEDD8 pathway: processing of full-length NEDD8 to its mature form and deconjugation of NEDD8 from targeted proteins such as cullins or p53. This is Sentrin-specific protease 8 (Senp8) from Rattus norvegicus (Rat).